A 123-amino-acid chain; its full sequence is Small ribosomal subunit protein uS12cz/uS12cy (123 aa).

The protein belongs to the universal ribosomal protein uS12 family. As to quaternary structure, part of the 30S ribosomal subunit.

It is found in the plastid. The protein resides in the chloroplast. Its function is as follows. With S4 and S5 plays an important role in translational accuracy. Located at the interface of the 30S and 50S subunits. This Cucumis sativus (Cucumber) protein is Small ribosomal subunit protein uS12cz/uS12cy (rps12-A).